The sequence spans 309 residues: Glutaminase (309 aa).

Residues serine 65, asparagine 117, glutamate 162, asparagine 169, tyrosine 193, tyrosine 245, and valine 263 each coordinate substrate.

It belongs to the glutaminase family. As to quaternary structure, homotetramer.

It catalyses the reaction L-glutamine + H2O = L-glutamate + NH4(+). The protein is Glutaminase of Bacillus cytotoxicus (strain DSM 22905 / CIP 110041 / 391-98 / NVH 391-98).